The chain runs to 350 residues: Chemokine C-C motif receptor-like 2 (350 aa).

Residues M1–Y43 lie on the Extracellular side of the membrane. N3 carries N-linked (GlcNAc...) asparagine glycosylation. A helical membrane pass occupies residues L44–V64. At K65–N74 the chain is on the cytoplasmic side. The chain crosses the membrane as a helical span at residues I75–V95. Residues H96 to K110 are Extracellular-facing. C109 and C187 are oxidised to a cystine. The chain crosses the membrane as a helical span at residues I111–T131. The Cytoplasmic segment spans residues V132–R149. A helical membrane pass occupies residues M150–L170. The Extracellular segment spans residues P171–H204. Residues F205–C225 form a helical membrane-spanning segment. Residues Y226–K244 are Cytoplasmic-facing. A helical membrane pass occupies residues L245 to F265. At L266–T288 the chain is on the extracellular side. A helical membrane pass occupies residues L289–F309. The Cytoplasmic segment spans residues D310 to M350. Residues P329–M350 form a disordered region.

The protein belongs to the G-protein coupled receptor 1 family.

Its subcellular location is the cell membrane. In terms of biological role, receptor for CCL19 and chemerin/RARRES2. Does not appear to be a signaling receptor, but may have a role in modulating chemokine-triggered immune responses by capturing and internalizing CCL19 or by presenting RARRES2 ligand to CMKLR1, a functional signaling receptor. Plays a critical role for the development of Th2 responses. In Sus scrofa (Pig), this protein is Chemokine C-C motif receptor-like 2 (CCRL2).